The primary structure comprises 348 residues: S-adenosyl-L-methionine-dependent methyl transferase PigF (348 aa).

E199 provides a ligand contact to S-adenosyl-L-methionine. H247 acts as the Proton acceptor in catalysis.

This sequence belongs to the class I-like SAM-binding methyltransferase superfamily. Cation-independent O-methyltransferase family.

It participates in antibiotic biosynthesis; prodigiosin biosynthesis. Its function is as follows. Involved in the biosynthesis of 4-methoxy-2,2'-bipyrrole-5-carbaldehyde (MBC), one of the terminal products involved in the biosynthesis of the red antibiotic prodigiosin (Pig). Catalyzes the transfer of a methyl group from S-adenosyl-L-methionine (SAM) to the hydroxyl group of 4-hydroxy-2,2'-bipyrrole-5-carbaldehyde (HBC) to yield 4-methoxy-2,2'-bipyrrole-5-carbaldehyde (MBC). This is S-adenosyl-L-methionine-dependent methyl transferase PigF from Serratia sp. (strain ATCC 39006) (Prodigiosinella confusarubida).